The sequence spans 605 residues: Dihydrogeodin oxidase (605 aa).

A signal peptide spans 1 to 18 (MPSLKDWVVAGLVPMTIA). N-linked (GlcNAc...) asparagine glycosylation is found at Asn27, Asn107, and Asn112. Plastocyanin-like domains follow at residues 65 to 183 (TVTQ…GPSS), 189 to 347 (DLGP…YDES), and 424 to 567 (YVDW…KIKP). Residues His117, His119, His161, and His163 each coordinate Cu cation. N-linked (GlcNAc...) asparagine glycosylation is found at Asn278 and Asn467. Cu cation contacts are provided by His484, His487, His489, His543, Cys544, His545, and His549.

This sequence belongs to the multicopper oxidase family. The cofactor is Cu cation.

It catalyses the reaction 2 dihydrogeodin + O2 + 2 H(+) = 2 (+)-geodin + 2 H2O. It functions in the pathway secondary metabolite biosynthesis. In terms of biological role, dihydrogeodin oxidase; part of the gene cluster that mediates the biosynthesis of geodin, an intermediate in the biosynthesis of other natural products. The pathway begins with the synthesis of atrochrysone thioester by the polyketide synthase (PKS) gedC. The atrochrysone carboxyl ACP thioesterase gedB then breaks the thioester bond and releases the atrochrysone carboxylic acid from gedC. The atrochrysone carboxylic acid is then converted to atrochrysone which is further transformed into emodinanthrone. The next step is performed by the emodinanthrone oxygenase gedH that catalyzes the oxidation of emodinanthrone to emodin. Emodin O-methyltransferase encoded probably by gedA then catalyzes methylation of the 8-hydroxy group of emodin to form questin. Ring cleavage of questin by questin oxidase gedK leads to desmethylsulochrin via several intermediates including questin epoxide. Another methylation step probably catalyzed by methyltransferase gedG leads to the formation of sulochrin which is further converted to dihydrogeodin by the sulochrin halogenase gedL. Finally, the dihydrogeodin oxidase gedJ catalyzes the stereospecific phenol oxidative coupling reaction converting dihydrogeodin to geodin. The chain is Dihydrogeodin oxidase from Aspergillus terreus (strain NIH 2624 / FGSC A1156).